Consider the following 667-residue polypeptide: Gamma-tubulin complex component 4 (667 aa).

The tract at residues 425–445 (HKADATQAREGPSRETSPREA) is disordered.

It belongs to the TUBGCP family. In terms of assembly, component of the gamma-tubulin ring complex (gTuRC) consisting of TUBGCP2, TUBGCP3, TUBGCP4, TUBGCP5 and TUBGCP6 and gamma-tubulin TUBG1 or TUBG2. TUBGCP2, TUBGCP3, TUBGCP4, TUBGCP5 and TUBGCP6 assemble in a 5:5:2:1:1 stoichiometry; each is associated with a gamma-tubulin, thereby arranging 14 gamma-tubulins in a helical manner. Gamma-tubulin at the first position is blocked by TUBGCP3 at the last position, allowing 13 protafilaments to grow into a microtubule. The gTuRC (via TUBGCP3 and TUBGCP6) interacts with ACTB and MZT1; the interactions form a luminal bridge that stabilizes the initial structure during complex assembly. The gTuRC (via TUBGCP2) interacts with MZT2A/MZT2B and CDK5RAP2 (via CM1 motif); the interactions play a role in gTuRC activation. Interacts with NINL. Interacts with ATF5; the ATF5:PCNT:polyglutamylated tubulin (PGT) tripartite unites the mother centriole and the pericentriolar material (PCM) in the centrosome. As to expression, ubiquitously expressed.

It localises to the cytoplasm. The protein resides in the cytoskeleton. Its subcellular location is the microtubule organizing center. It is found in the centrosome. Component of the gamma-tubulin ring complex (gTuRC) which mediates microtubule nucleation. The gTuRC regulates the minus-end nucleation of alpha-beta tubulin heterodimers that grow into microtubule protafilaments, a critical step in centrosome duplication and spindle formation. This chain is Gamma-tubulin complex component 4 (TUBGCP4), found in Homo sapiens (Human).